Consider the following 814-residue polypeptide: Cadherin-15 (814 aa).

The signal sequence occupies residues 1 to 21 (MDAAFLLVLGLLAQSLCLSLG). The propeptide occupies 22–60 (VPGWRRPTTLYPWRRAPALSRVRRAWVIPPISVSENHKR). Cadherin domains lie at 61–152 (LPYP…RPAF), 153–260 (LQEA…APEF), 261–375 (TRDE…PPVF), 376–481 (QENP…DHAP), and 482–590 (VLAP…VCLP). Over 61 to 606 (LPYPLVQIKS…AGGTGLSLGA (546 aa)) the chain is Extracellular. A glycan (N-linked (GlcNAc...) asparagine) is linked at asparagine 227. N-linked (GlcNAc...) asparagine glycosylation is found at asparagine 531, asparagine 538, and asparagine 576. The chain crosses the membrane as a helical span at residues 607-626 (LVIVLASALLLLVLVLLVAL). Topologically, residues 627–814 (RARFWKQSRG…LLPRHRGRTA (188 aa)) are cytoplasmic. 2 disordered regions span residues 636–663 (GKGL…GEED) and 676–703 (TALS…PPRV).

As to expression, expressed in the brain and cerebellum.

It is found in the cell membrane. In terms of biological role, cadherins are calcium-dependent cell adhesion proteins. They preferentially interact with themselves in a homophilic manner in connecting cells; cadherins may thus contribute to the sorting of heterogeneous cell types. M-cadherin is part of the myogenic program and may provide a trigger for terminal muscle differentiation. This Homo sapiens (Human) protein is Cadherin-15 (CDH15).